Reading from the N-terminus, the 369-residue chain is tRNA-specific 2-thiouridylase MnmA (369 aa).

ATP contacts are provided by residues 10–17 (GLSGGVDS) and Leu-36. The Nucleophile role is filled by Cys-97. Cysteines 97 and 196 form a disulfide. Gly-122 provides a ligand contact to ATP. Positions 146 to 148 (KDQ) are interaction with tRNA. Residue Cys-196 is the Cysteine persulfide intermediate of the active site. The tract at residues 301-302 (RY) is interaction with tRNA.

It belongs to the MnmA/TRMU family.

It is found in the cytoplasm. The catalysed reaction is S-sulfanyl-L-cysteinyl-[protein] + uridine(34) in tRNA + AH2 + ATP = 2-thiouridine(34) in tRNA + L-cysteinyl-[protein] + A + AMP + diphosphate + H(+). In terms of biological role, catalyzes the 2-thiolation of uridine at the wobble position (U34) of tRNA, leading to the formation of s(2)U34. This Thermosynechococcus vestitus (strain NIES-2133 / IAM M-273 / BP-1) protein is tRNA-specific 2-thiouridylase MnmA.